The following is a 299-amino-acid chain: Endonuclease 4 (299 aa).

The N-terminal stretch at 1-24 (MSSSLRQWFARVLVLTQLINGALC) is a signal peptide. A divalent metal cation-binding residues include W25 and H30. Position 25-30 (25-30 (WGKEGH)) interacts with substrate. A disulfide bond links C34 and C65. D69 and H84 together coordinate a divalent metal cation. Residues 69–75 (DEIKHHW), 84–87 (HYVD), and 94–99 (NYEYCR) each bind substrate. Intrachain disulfides connect C93/C246, C101/C111, and C226/C233. Positions 118 and 136 each coordinate substrate. N118 carries an N-linked (GlcNAc...) asparagine glycan. The N-linked (GlcNAc...) asparagine glycan is linked to N137. A divalent metal cation-binding residues include H147, D151, H157, H181, and D185. The substrate binding stretch occupies residues 147–196 (HFIGDIHQPLHVGFLGDEGGNTITVRWYRRKTNLHHVWDNMIIESALKTY). N-linked (GlcNAc...) asparagine glycosylation is found at N198, N211, and N229. Residues 284–299 (ATLNRIFSSKPKHAGS) constitute a propeptide, removed in mature form.

Belongs to the nuclease type I family. As to quaternary structure, monomer. Mn(2+) is required as a cofactor. Ca(2+) serves as cofactor.

The enzyme catalyses Endonucleolytic cleavage to 5'-phosphomononucleotide and 5'-phosphooligonucleotide end-products.. In terms of biological role, endonuclease that can use single-stranded RNA and DNA as substrates. In contradiction with PubMed:23620482, cannot hydrolyze single-stranded DNA and does not cleave mismatches. This Arabidopsis thaliana (Mouse-ear cress) protein is Endonuclease 4.